The chain runs to 309 residues: Sulfur oxygenase/reductase (309 aa).

C31 carries the cysteine persulfide modification. H86, H90, and E114 together coordinate Fe cation.

Homoicosatetramer. The resulting structure is a hollow sphere where catalysis takes place in the inside cavity. Fe cation serves as cofactor.

The protein localises to the cytoplasm. It carries out the reaction 4 sulfur + O2 + 4 H2O = 2 hydrogen sulfide + 2 sulfite + 6 H(+). Its activity is regulated as follows. Inhibited by zinc. Functionally, catalyzes the simultaneous oxidation and reduction of elemental sulfur in the presence of oxygen, with sulfite and hydrogen sulfide as products. The chain is Sulfur oxygenase/reductase (sor) from Acidianus ambivalens (Desulfurolobus ambivalens).